The chain runs to 234 residues: Phosphoribosylaminoimidazole-succinocarboxamide synthase (234 aa).

Belongs to the SAICAR synthetase family.

It catalyses the reaction 5-amino-1-(5-phospho-D-ribosyl)imidazole-4-carboxylate + L-aspartate + ATP = (2S)-2-[5-amino-1-(5-phospho-beta-D-ribosyl)imidazole-4-carboxamido]succinate + ADP + phosphate + 2 H(+). It participates in purine metabolism; IMP biosynthesis via de novo pathway; 5-amino-1-(5-phospho-D-ribosyl)imidazole-4-carboxamide from 5-amino-1-(5-phospho-D-ribosyl)imidazole-4-carboxylate: step 1/2. This Staphylococcus carnosus (strain TM300) protein is Phosphoribosylaminoimidazole-succinocarboxamide synthase.